A 484-amino-acid polypeptide reads, in one-letter code: Arginine ADP-riboxanase OspC3 (484 aa).

Residues histidine 143, glutamine 144, serine 145, asparagine 155, lysine 157, threonine 169, asparagine 172, and threonine 173 each coordinate NAD(+). Glutamate 326 is an active-site residue. ANK repeat units lie at residues 369-398, 413-444, and 451-480; these read MAHQ…FTKQ, NLYD…DVNK, and SGDT…ILGK.

The protein belongs to the OspC family. As to quaternary structure, interacts with host calmodulin (CALM1, CALM2 and/or CALM3); specifically interacts with the apo form of calmodulin, preventing calcium-binding.

It localises to the secreted. The protein localises to the host cytoplasm. It carries out the reaction L-arginyl-[protein] + NAD(+) = ADP-riboxanated L-argininyl-[protein] + nicotinamide + NH4(+) + H(+). Its activity is regulated as follows. Interaction with host calmodulin (CALM1, CALM2 and/or CALM3) is required to mediate arginine ADP-riboxanation of host caspases. In terms of biological role, ADP-riboxanase effector that inhibits host cell pyroptosis. Acts by mediating arginine ADP-riboxanation of host CASP4/CASP11, blocking CASP4/CASP11 autoprocessing. This prevents CASP4 activation and ability to recognize and cleave GSDMD, thereby inhibiting LPS-induced pyroptosis. ADP-riboxanation takes place in two steps: OspC3 first catalyzes ADP-ribosylation of target Arg, and then initiates a deamination to remove one N-omega group. Independently of its ADP-riboxanase activity, acts as an inhibitor of calcium signaling by inhibiting host calmodulin, preventing activation of the JAK-STAT signaling pathway in response to interferon-beta. Mechanistically, acts by binding to the apo form of calmodulin, preventing calcium-binding and ability to activate host CaMK2 (CAMKII), which is required to stimulate the JAK-STAT signaling pathway in response to interferon-beta. This chain is Arginine ADP-riboxanase OspC3, found in Shigella flexneri.